A 557-amino-acid chain; its full sequence is Glutathione hydrolase proenzyme (557 aa).

The first 24 residues, 1 to 24 (MQPVLFRTLSLGVAIAAASSSAFA), serve as a signal peptide directing secretion. Arginine 94 serves as a coordination point for L-glutamate. Threonine 364 serves as the catalytic Nucleophile. Residues threonine 382, asparagine 384, glutamate 403, aspartate 406, 435 to 436 (SS), and 456 to 457 (GG) contribute to the L-glutamate site.

This sequence belongs to the gamma-glutamyltransferase family. As to quaternary structure, this enzyme consists of two polypeptide chains, which are synthesized in precursor form from a single polypeptide. In terms of processing, cleaved by autocatalysis into a large and a small subunit.

It localises to the periplasm. It carries out the reaction an N-terminal (5-L-glutamyl)-[peptide] + an alpha-amino acid = 5-L-glutamyl amino acid + an N-terminal L-alpha-aminoacyl-[peptide]. It catalyses the reaction glutathione + H2O = L-cysteinylglycine + L-glutamate. The catalysed reaction is an S-substituted glutathione + H2O = an S-substituted L-cysteinylglycine + L-glutamate. Its pathway is sulfur metabolism; glutathione metabolism. This chain is Glutathione hydrolase proenzyme (ggt), found in Pseudomonas aeruginosa (strain ATCC 15692 / DSM 22644 / CIP 104116 / JCM 14847 / LMG 12228 / 1C / PRS 101 / PAO1).